The chain runs to 346 residues: Structure-specific endonuclease subunit SLX1 (346 aa).

Residues 22–105 (DFYGVYLLRS…QHPYQTRHIK (84 aa)) enclose the GIY-YIG domain. An SLX1-type zinc finger spans residues 216–306 (CFICNETIDY…TPLQGKCLSC (91 aa)).

Belongs to the SLX1 family. As to quaternary structure, forms a heterodimer with SLX4. A divalent metal cation is required as a cofactor.

It is found in the nucleus. In terms of biological role, catalytic subunit of the SLX1-SLX4 structure-specific endonuclease that resolves DNA secondary structures generated during DNA repair and recombination. Has endonuclease activity towards branched DNA substrates, introducing single-strand cuts in duplex DNA close to junctions with ss-DNA. The chain is Structure-specific endonuclease subunit SLX1 from Debaryomyces hansenii (strain ATCC 36239 / CBS 767 / BCRC 21394 / JCM 1990 / NBRC 0083 / IGC 2968) (Yeast).